The primary structure comprises 127 residues: Small ribosomal subunit protein uS11 (127 aa).

The protein belongs to the universal ribosomal protein uS11 family. Part of the 30S ribosomal subunit. Interacts with proteins S7 and S18. Binds to IF-3.

Its function is as follows. Located on the platform of the 30S subunit, it bridges several disparate RNA helices of the 16S rRNA. Forms part of the Shine-Dalgarno cleft in the 70S ribosome. This chain is Small ribosomal subunit protein uS11, found in Rickettsia prowazekii (strain Madrid E).